The primary structure comprises 337 residues: tRNA N6-adenosine threonylcarbamoyltransferase (337 aa).

Positions 111 and 115 each coordinate Fe cation. Residues 134 to 138 (LVSGG), D167, G180, and N272 contribute to the substrate site. Fe cation is bound at residue D300.

This sequence belongs to the KAE1 / TsaD family. Requires Fe(2+) as cofactor.

The protein localises to the cytoplasm. The enzyme catalyses L-threonylcarbamoyladenylate + adenosine(37) in tRNA = N(6)-L-threonylcarbamoyladenosine(37) in tRNA + AMP + H(+). Its function is as follows. Required for the formation of a threonylcarbamoyl group on adenosine at position 37 (t(6)A37) in tRNAs that read codons beginning with adenine. Is involved in the transfer of the threonylcarbamoyl moiety of threonylcarbamoyl-AMP (TC-AMP) to the N6 group of A37, together with TsaE and TsaB. TsaD likely plays a direct catalytic role in this reaction. In Salmonella schwarzengrund (strain CVM19633), this protein is tRNA N6-adenosine threonylcarbamoyltransferase.